Reading from the N-terminus, the 838-residue chain is V-type proton ATPase 116 kDa subunit a 1 (838 aa).

Topologically, residues 1–388 (MGELFRSEEM…DAYGIGTYRE (388 aa)) are cytoplasmic. Residues threonine 250 and threonine 360 each carry the phosphothreonine modification. Tyrosine 364 is subject to Phosphotyrosine. The chain crosses the membrane as a helical span at residues 389 to 407 (INPAPYTIITFPFLFAVMF). At 408 to 409 (GD) the chain is on the vacuolar side. A helical membrane pass occupies residues 410-426 (LGHGILMTLFAVWMVLK). At 427 to 441 (ESRILSQKNENEMFS) the chain is on the cytoplasmic side. Residues 442–471 (TIFSGRYIILLMGVFSIYTGLIYNDCFSKS) form a helical membrane-spanning segment. Over 472 to 535 (LNIFGSSWSV…ATNKLTFLNS (64 aa)) the chain is Vacuolar. The chain crosses the membrane as a helical span at residues 536 to 555 (FKMKMSVILGIIHMLFGVSL). Topologically, residues 556–573 (SLFNHTYFKKPLNIYFGF) are cytoplasmic. A helical membrane pass occupies residues 574–594 (IPEIIFMTSLFGYLVILIFYK). Topologically, residues 595-639 (WTAYNAKTSEKAPSLLIHFINMFLFSYGDSGNSMLYSGQKGIQCF) are vacuolar. Residues 640-659 (LVVVALLCVPWMLLFKPLVL) traverse the membrane as a helical segment. The Cytoplasmic portion of the chain corresponds to 660 to 725 (RRQYLRRKHL…DTMVHQAIHT (66 aa)). A helical transmembrane segment spans residues 726–750 (IEYCLGCISNTASYLRLWALSLAHA). Topologically, residues 751–771 (QLSEVLWTMVIHIGLKVKSLA) are vacuolar. Residues 772–810 (GGLALFFIFAAFATLTVAILLIMEGLSAFLHALRLHWVE) form a helical membrane-spanning segment. Residues 811 to 838 (FQNKFYSGTGFKFLPFSFEHIREGKFDD) lie on the Cytoplasmic side of the membrane.

This sequence belongs to the V-ATPase 116 kDa subunit family. In terms of assembly, V-ATPase is a heteromultimeric enzyme made up of two complexes: the ATP-hydrolytic V1 complex and the proton translocation V0 complex. The V1 complex consists of three catalytic AB heterodimers that form a heterohexamer, three peripheral stalks each consisting of EG heterodimers, one central rotor including subunits D and F, and the regulatory subunits C and H. The proton translocation complex V0 consists of the proton transport subunit a, a ring of proteolipid subunits c9c'', rotary subunit d, subunits e and f, and the accessory subunits ATP6AP1/Ac45 and ATP6AP2/PRR. Interacts with SPAAR. In terms of tissue distribution, expressed in brain (at protein level). Expressed heart, kidney, liver, spleen, and to a lesser extent in brain.

It is found in the cytoplasmic vesicle. It localises to the clathrin-coated vesicle membrane. The protein localises to the secretory vesicle. The protein resides in the synaptic vesicle membrane. Its subcellular location is the melanosome. Its function is as follows. Subunit of the V0 complex of vacuolar(H+)-ATPase (V-ATPase), a multisubunit enzyme composed of a peripheral complex (V1) that hydrolyzes ATP and a membrane integral complex (V0) that translocates protons. V-ATPase is responsible for the acidification of various organelles, such as lysosomes, endosomes, the trans-Golgi network, and secretory granules, including synaptic vesicles. In certain cell types, can be exported to the plasma membrane, where it is involved in the acidification of the extracellular environment. Required for assembly and activity of the vacuolar ATPase. Through its action on compartment acidification, plays an essential role in neuronal development in terms of integrity and connectivity of neurons. The chain is V-type proton ATPase 116 kDa subunit a 1 (ATP6V0A1) from Bos taurus (Bovine).